Consider the following 143-residue polypeptide: Interferon gamma (143 aa).

Residue Gln-1 is modified to Pyrrolidone carboxylic acid. 2 N-linked (GlcNAc...) asparagine glycosylation sites follow: Asn-25 and Asn-97.

This sequence belongs to the type II (or gamma) interferon family. As to quaternary structure, homodimer. Interacts with IFNGR1 (via extracellular domain); this interaction promotes IFNGR1 dimerization.

Its subcellular location is the secreted. Functionally, type II interferon produced by immune cells such as T-cells and NK cells that plays crucial roles in antimicrobial, antiviral, and antitumor responses by activating effector immune cells and enhancing antigen presentation. Primarily signals through the JAK-STAT pathway after interaction with its receptor IFNGR1 to affect gene regulation. Upon IFNG binding, IFNGR1 intracellular domain opens out to allow association of downstream signaling components JAK2, JAK1 and STAT1, leading to STAT1 activation, nuclear translocation and transcription of IFNG-regulated genes. Many of the induced genes are transcription factors such as IRF1 that are able to further drive regulation of a next wave of transcription. Plays a role in class I antigen presentation pathway by inducing a replacement of catalytic proteasome subunits with immunoproteasome subunits. In turn, increases the quantity, quality, and repertoire of peptides for class I MHC loading. Increases the efficiency of peptide generation also by inducing the expression of activator PA28 that associates with the proteasome and alters its proteolytic cleavage preference. Up-regulates as well MHC II complexes on the cell surface by promoting expression of several key molecules such as cathepsins B/CTSB, H/CTSH, and L/CTSL. Participates in the regulation of hematopoietic stem cells during development and under homeostatic conditions by affecting their development, quiescence, and differentiation. The protein is Interferon gamma (IFNG) of Pan troglodytes (Chimpanzee).